Here is a 185-residue protein sequence, read N- to C-terminus: Ribosome-recycling factor (185 aa).

A disordered region spans residues 143 to 163 (RKDGEAGEDEVARAEKDLDKS).

It belongs to the RRF family.

It is found in the cytoplasm. Its function is as follows. Responsible for the release of ribosomes from messenger RNA at the termination of protein biosynthesis. May increase the efficiency of translation by recycling ribosomes from one round of translation to another. This Mycobacterium marinum (strain ATCC BAA-535 / M) protein is Ribosome-recycling factor.